The following is a 516-amino-acid chain: Glucose-1-phosphate adenylyltransferase large subunit 1, chloroplastic/amyloplastic (516 aa).

A chloroplast-targeting transit peptide spans 1-45; the sequence is MQFALALDTNSGPHQIRSCEGDGIDRLEKLSIGGRKQEKALRNRC.

This sequence belongs to the bacterial/plant glucose-1-phosphate adenylyltransferase family. In terms of assembly, heterotetramer. As to expression, endosperm.

The protein resides in the plastid. Its subcellular location is the chloroplast. It localises to the amyloplast. It catalyses the reaction alpha-D-glucose 1-phosphate + ATP + H(+) = ADP-alpha-D-glucose + diphosphate. Its pathway is glycan biosynthesis; starch biosynthesis. With respect to regulation, activated by 3'phosphoglycerate, inhibited by orthophosphate. Allosteric regulation. Functionally, this protein plays a role in synthesis of starch. It catalyzes the synthesis of the activated glycosyl donor, ADP-glucose from Glc-1-P and ATP. This Zea mays (Maize) protein is Glucose-1-phosphate adenylyltransferase large subunit 1, chloroplastic/amyloplastic (SH2).